The primary structure comprises 365 residues: NAD(P)H-quinone oxidoreductase subunit 1, chloroplastic (365 aa).

8 helical membrane passes run 27-47 (VWIFVPIFSLVLGIITGVLVI), 98-118 (FSIGPSIAVISILLSYSVIPF), 129-149 (IGIFLWIAISSIAPIGLLMSG), 165-185 (AAQSISYEIPLTLCVLSISLL), 203-223 (FWGWNLWRQPIGFIIFLISSL), 253-273 (FGLFYVASYINLLISSLFVTI), 302-322 (IFGTTIGIFITLAKTYLFLFI), and 345-365 (FLLPISLGNLLLTTSFQLFSL).

It belongs to the complex I subunit 1 family. NDH is composed of at least 16 different subunits, 5 of which are encoded in the nucleus.

It is found in the plastid. The protein resides in the chloroplast thylakoid membrane. It carries out the reaction a plastoquinone + NADH + (n+1) H(+)(in) = a plastoquinol + NAD(+) + n H(+)(out). It catalyses the reaction a plastoquinone + NADPH + (n+1) H(+)(in) = a plastoquinol + NADP(+) + n H(+)(out). Its function is as follows. NDH shuttles electrons from NAD(P)H:plastoquinone, via FMN and iron-sulfur (Fe-S) centers, to quinones in the photosynthetic chain and possibly in a chloroplast respiratory chain. The immediate electron acceptor for the enzyme in this species is believed to be plastoquinone. Couples the redox reaction to proton translocation, and thus conserves the redox energy in a proton gradient. In Arabis hirsuta (Hairy rock-cress), this protein is NAD(P)H-quinone oxidoreductase subunit 1, chloroplastic.